The following is a 444-amino-acid chain: Acyl-CoA (8-3)-desaturase (444 aa).

M1 is modified (N-acetylmethionine). Residues 1-121 (MAPDPVAAKT…FRELRATVEQ (121 aa)) are Cytoplasmic-facing. A Cytochrome b5 heme-binding domain is found at 17 to 94 (PRYFTWDEVA…MNSLLIGELS (78 aa)). Residues 122–142 (MGLMKANHVFFLLYLLHILLL) traverse the membrane as a helical segment. Topologically, residues 143–146 (DGAA) are lumenal. A helical membrane pass occupies residues 147 to 167 (WLTLWIFGTSFLPFLLCAVLL). Over 168–267 (TAAQIQAGWL…PYNHQHKYFF (100 aa)) the chain is Cytoplasmic. The Histidine box-1 signature appears at 179 to 183 (HDLGH). The short motif at 216–220 (HFQHH) is the Histidine box-2 element. A helical transmembrane segment spans residues 268-288 (LIGPPALVPFFFQWYVFYFVI). Residues 289-305 (QRKKWVDLAWMITFYIR) lie on the Lumenal side of the membrane. Residues 306–326 (LLLTYVPLLGLKAFLGLYFIV) form a helical membrane-spanning segment. The Cytoplasmic portion of the chain corresponds to 327-444 (RFLESNWFVW…QLWLDAYLHQ (118 aa)). Positions 382–386 (QIEHH) match the Histidine box-3 motif.

The protein belongs to the fatty acid desaturase type 1 family. In terms of tissue distribution, widely expressed. Expressed in brain, liver and thymus (at protein level). Isoform 1 seems to be more abundant than isoform 2. Expression of isoform 2 is very low in spleen and not detectable in skeletal muscle.

It localises to the endoplasmic reticulum membrane. Its subcellular location is the mitochondrion. It catalyses the reaction (8Z,11Z,14Z)-eicosatrienoyl-CoA + 2 Fe(II)-[cytochrome b5] + O2 + 2 H(+) = (5Z,8Z,11Z,14Z)-eicosatetraenoyl-CoA + 2 Fe(III)-[cytochrome b5] + 2 H2O. The enzyme catalyses (8Z,11Z,14Z,17Z)-eicosatetraenoyl-CoA + 2 Fe(II)-[cytochrome b5] + O2 + 2 H(+) = (5Z,8Z,11Z,14Z,17Z)-eicosapentaenoyl-CoA + 2 Fe(III)-[cytochrome b5] + 2 H2O. The catalysed reaction is (11E)-octadecenoyl-CoA + 2 Fe(II)-[cytochrome b5] + O2 + 2 H(+) = (5Z,11E)-octadecadienoyl-CoA + 2 Fe(III)-[cytochrome b5] + 2 H2O. It functions in the pathway lipid metabolism; polyunsaturated fatty acid biosynthesis. In terms of biological role, acts as a front-end fatty acyl-coenzyme A (CoA) desaturase that introduces a cis double bond at carbon 5 located between a preexisting double bond and the carboxyl end of the fatty acyl chain. Involved in biosynthesis of highly unsaturated fatty acids (HUFA) from the essential polyunsaturated fatty acids (PUFA) linoleic acid (LA) (18:2n-6) and alpha-linolenic acid (ALA) (18:3n-3) precursors. Specifically, desaturates dihomo-gamma-linoleoate (DGLA) (20:3n-6) and eicosatetraenoate (ETA) (20:4n-3) to generate arachidonate (AA) (20:4n-6) and eicosapentaenoate (EPA) (20:5n-3), respectively. As a rate limiting enzyme for DGLA (20:3n-6) and AA (20:4n-6)-derived eicosanoid biosynthesis, controls the metabolism of inflammatory lipids like prostaglandin E2, critical for efficient acute inflammatory response and maintenance of epithelium homeostasis. Contributes to membrane phospholipid biosynthesis by providing AA (20:4n-6) as a major acyl chain esterified into phospholipids. In particular, regulates phosphatidylinositol-4,5-bisphosphate levels, modulating inflammatory cytokine production in T-cells. Also desaturates (11E)-octadecenoate (trans-vaccenoate)(18:1n-9), a metabolite in the biohydrogenation pathway of LA (18:2n-6). Its function is as follows. Does not exhibit any catalytic activity toward 20:3n-6, but it may enhance FADS2 activity. The sequence is that of Acyl-CoA (8-3)-desaturase from Papio anubis (Olive baboon).